We begin with the raw amino-acid sequence, 178 residues long: Nucleoside-triphosphatase THEP1 (178 aa).

Residues 7–14 (GEPGVGKT) and 102–109 (VIIIDEIG) contribute to the ATP site.

Belongs to the THEP1 NTPase family. As to quaternary structure, monomer.

It carries out the reaction a ribonucleoside 5'-triphosphate + H2O = a ribonucleoside 5'-diphosphate + phosphate + H(+). Functionally, has nucleotide phosphatase activity towards ATP, GTP, CTP, TTP and UTP. May hydrolyze nucleoside diphosphates with lower efficiency. Does not have kinase activity. The sequence is that of Nucleoside-triphosphatase THEP1 from Aquifex aeolicus (strain VF5).